We begin with the raw amino-acid sequence, 107 residues long: UPF0473 protein llmg_0152 (107 aa).

Belongs to the UPF0473 family.

This chain is UPF0473 protein llmg_0152, found in Lactococcus lactis subsp. cremoris (strain MG1363).